The primary structure comprises 465 residues: UDP-glycosyltransferase TURAN (465 aa).

At 1–75 (MGKRGRACVV…FIQYFPKILY (75 aa)) the chain is on the cytoplasmic side. A helical membrane pass occupies residues 76 to 96 (PVTLLLKAFIQFTMLLWFLFV). Over 97-465 (KVPAPDIFLV…TQVVSQIADS (369 aa)) the chain is Lumenal. An N-linked (GlcNAc...) asparagine glycan is attached at asparagine 238.

This sequence belongs to the glycosyltransferase group 1 family. Glycosyltransferase 33 subfamily.

It is found in the endoplasmic reticulum membrane. Its pathway is protein modification; protein glycosylation. Functionally, required for pollen tube (PT) growth and integrity by affecting the stability of the pollen-specific ANX1 and ANX2 proteins. Involved in protein N-glycosylation in the endoplasmic reticulum (ER), especially in the female gametophyte. Mediates PT reception in synergids through protein glycosylation. In Arabidopsis thaliana (Mouse-ear cress), this protein is UDP-glycosyltransferase TURAN.